Here is a 314-residue protein sequence, read N- to C-terminus: L-lactate dehydrogenase 2 (314 aa).

NAD(+)-binding positions include Val-16, Asp-37, Lys-42, Tyr-68, and 82-83; that span reads GL. Substrate is bound by residues Gln-85, Arg-91, and 123–126; that span reads NPVD. Residues 121 to 123 and Ser-146 contribute to the NAD(+) site; that span reads ATN. Substrate is bound at residue 151-154; that stretch reads DSAR. Arg-156 and His-171 together coordinate beta-D-fructose 1,6-bisphosphate. His-178 acts as the Proton acceptor in catalysis. Tyr-223 is modified (phosphotyrosine). Thr-232 serves as a coordination point for substrate.

The protein belongs to the LDH/MDH superfamily. LDH family. In terms of assembly, homotetramer.

Its subcellular location is the cytoplasm. The catalysed reaction is (S)-lactate + NAD(+) = pyruvate + NADH + H(+). It participates in fermentation; pyruvate fermentation to lactate; (S)-lactate from pyruvate: step 1/1. With respect to regulation, allosterically activated by fructose 1,6-bisphosphate (FBP). Catalyzes the conversion of lactate to pyruvate. The polypeptide is L-lactate dehydrogenase 2 (Bacillus cereus (strain ATCC 14579 / DSM 31 / CCUG 7414 / JCM 2152 / NBRC 15305 / NCIMB 9373 / NCTC 2599 / NRRL B-3711)).